The sequence spans 84 residues: Small ribosomal subunit protein bS16 (84 aa).

Belongs to the bacterial ribosomal protein bS16 family.

This is Small ribosomal subunit protein bS16 from Thioalkalivibrio sulfidiphilus (strain HL-EbGR7).